We begin with the raw amino-acid sequence, 654 residues long: MPTLLQHAQIDWDDQGRPHSRHYDDVYFAVNEGIEETKHVFLGQTRLAERFAHLAPHACTVIGETGFGTGMNFFCAWQLFDQHAHSDARLHFVSVEKYPLDHADMARAVRLWPELAAYTEPLLEQYVAVHPGFQQFTFAGGRVTLTLLIGDVLEQLPQLDAQIDVWFLDGFAPAKNPDMWTPELFAQLARLSHPGTVLGTFTTTGWVRRSLVEAGFAMKKVPGIGKKWEVMSGAYVGPLPGPCAPWYARPAVTQGPREALVIGAGLAGSSSAASLARRGWQVTVLERHEAPAQEASGNPQGVLYLKLSAHGTALSQMILSGFGYTRRQLQRLQRGRDWDACGVLQLAFDSKEAERQGKLAAAFDPGLLHCLARAEAEAIAGVALPGGGLFYPEGGWVHPPALCQQQLQHPGIRVVTHQDVLELRKVDEHWQAWAGDQLLARAPVVVLAGAADVLRFEPCAQLPLKRIRGQITRLPATASSQALRTVVCAEGYVAPPREGEHTLGASFDFHSEDLAPTVAEHQGNLALLDEISVDLAQRLAVAELDPEQLQGRAAFRCTSPDYLPIVGPIADAQAFAEAYAVLGRDARQVPDVPCPWLGGLYVNSGHGSRGLITAPLSGELVAAWVCGEPLPLPRAVAQACHPNRFGLRRLIRGK.

The tRNA (mnm(5)s(2)U34)-methyltransferase stretch occupies residues 1–236 (MPTLLQHAQI…KWEVMSGAYV (236 aa)). The tract at residues 262-654 (IGAGLAGSSS…FGLRRLIRGK (393 aa)) is FAD-dependent cmnm(5)s(2)U34 oxidoreductase.

It in the N-terminal section; belongs to the methyltransferase superfamily. tRNA (mnm(5)s(2)U34)-methyltransferase family. In the C-terminal section; belongs to the DAO family. Requires FAD as cofactor.

Its subcellular location is the cytoplasm. It carries out the reaction 5-aminomethyl-2-thiouridine(34) in tRNA + S-adenosyl-L-methionine = 5-methylaminomethyl-2-thiouridine(34) in tRNA + S-adenosyl-L-homocysteine + H(+). Catalyzes the last two steps in the biosynthesis of 5-methylaminomethyl-2-thiouridine (mnm(5)s(2)U) at the wobble position (U34) in tRNA. Catalyzes the FAD-dependent demodification of cmnm(5)s(2)U34 to nm(5)s(2)U34, followed by the transfer of a methyl group from S-adenosyl-L-methionine to nm(5)s(2)U34, to form mnm(5)s(2)U34. The chain is tRNA 5-methylaminomethyl-2-thiouridine biosynthesis bifunctional protein MnmC from Pseudomonas putida (strain ATCC 700007 / DSM 6899 / JCM 31910 / BCRC 17059 / LMG 24140 / F1).